The sequence spans 248 residues: MAGHSQFKNIMHRKGRQDAVRSKIFSKLAREITVAAKQGAPDPAMNPRLRLAVQNAKAQSMPKDNIERAIKKASGTDVENYDEVRYEGYGPGGVAVIVEALTDNRNRTASNVRAAFTKSGGALGETGSVSFMFNRIGEIIYKPEAGTADHIMDAAIEAGAEDVQSEESGHHITCAFEDIGEVSKTLESKLGEAESIKTIWKATTLAPIDEEKALSVLRLISTLEEDDDVQNVYANFDVSDEILAKLSV.

The protein belongs to the TACO1 family.

The protein localises to the cytoplasm. The protein is Probable transcriptional regulatory protein BT_2363 of Bartonella tribocorum (strain CIP 105476 / IBS 506).